The primary structure comprises 456 residues: Enolase (456 aa).

A (2R)-2-phosphoglycerate-binding site is contributed by Gln164. Catalysis depends on Glu207, which acts as the Proton donor. 3 residues coordinate Mg(2+): Asp244, Glu287, and Asp314. Residues Lys339, Arg368, Ser369, and Lys390 each contribute to the (2R)-2-phosphoglycerate site. Lys339 acts as the Proton acceptor in catalysis.

The protein belongs to the enolase family. In terms of assembly, component of the RNA degradosome, a multiprotein complex involved in RNA processing and mRNA degradation. It depends on Mg(2+) as a cofactor.

The protein resides in the cytoplasm. The protein localises to the secreted. Its subcellular location is the cell surface. It carries out the reaction (2R)-2-phosphoglycerate = phosphoenolpyruvate + H2O. It participates in carbohydrate degradation; glycolysis; pyruvate from D-glyceraldehyde 3-phosphate: step 4/5. Catalyzes the reversible conversion of 2-phosphoglycerate (2-PG) into phosphoenolpyruvate (PEP). It is essential for the degradation of carbohydrates via glycolysis. The sequence is that of Enolase from Francisella tularensis subsp. tularensis (strain FSC 198).